We begin with the raw amino-acid sequence, 354 residues long: Ferrochelatase (354 aa).

The Fe cation site is built by H214 and E295.

Belongs to the ferrochelatase family.

It localises to the cytoplasm. It carries out the reaction heme b + 2 H(+) = protoporphyrin IX + Fe(2+). It participates in porphyrin-containing compound metabolism; protoheme biosynthesis; protoheme from protoporphyrin-IX: step 1/1. Its function is as follows. Catalyzes the ferrous insertion into protoporphyrin IX. This chain is Ferrochelatase, found in Burkholderia orbicola (strain MC0-3).